A 570-amino-acid polypeptide reads, in one-letter code: Pantothenate kinase 2, mitochondrial (570 aa).

A mitochondrion-targeting transit peptide spans 1–31 (MRRLGPFHPRVHWAAPPSLSSGLHRLLFLRG). 2 disordered regions span residues 34 to 94 (IPSS…PRAR) and 127 to 198 (GRLG…SVSR). Residues 82 to 94 (RWRNGRGGRPRAR) carry the Nucleolar localization signal motif. Residues 84 to 93 (RNGRGGRPRA) show a composition bias toward basic residues. The segment covering 155–164 (PEGRRQEPLR) has biased composition (basic and acidic residues). S168, S169, and S189 each carry phosphoserine. Low complexity predominate over residues 168–179 (SSASVPAVGASA). The Nuclear export signal motif lies at 268–275 (LELKDLTL). E338 acts as the Proton acceptor in catalysis. Acetyl-CoA contacts are provided by S392, S395, and R407.

This sequence belongs to the type II pantothenate kinase family. In terms of assembly, homodimer. Post-translationally, synthesized as a 62-kDa precursor which is proteolytically processed by the mitochondrial-processing peptidase (MPP) via a 59-kDa intermediate to yield the mature mitochondrial 48-kDa subunit. In terms of tissue distribution, expressed in the brain (at protein level). Ubiquitous. Highly expressed in the testis. Expressed in the umbilical vein endothelial cells (HUVEC).

It localises to the mitochondrion. It is found in the mitochondrion intermembrane space. Its subcellular location is the nucleus. The protein localises to the cytoplasm. The catalysed reaction is (R)-pantothenate + ATP = (R)-4'-phosphopantothenate + ADP + H(+). It functions in the pathway cofactor biosynthesis; coenzyme A biosynthesis; CoA from (R)-pantothenate: step 1/5. With respect to regulation, strongly inhibited by acetyl-CoA and its thioesters. Activated by palmitoylcarnitine. In terms of biological role, mitochondrial isoform that catalyzes the phosphorylation of pantothenate to generate 4'-phosphopantothenate in the first and rate-determining step of coenzyme A (CoA) synthesis. Required for angiogenic activity of umbilical vein of endothelial cells (HUVEC). Cytoplasmic isoform that catalyzes the phosphorylation of pantothenate to generate 4'-phosphopantothenate in the first and rate-determining step of coenzyme A (CoA) synthesis. The chain is Pantothenate kinase 2, mitochondrial (PANK2) from Homo sapiens (Human).